Reading from the N-terminus, the 400-residue chain is Spaetzle-processing enzyme (400 aa).

Residues 1-27 (MASTERNFLLLSLVVSALSGLVHRSDA) form the signal peptide. Positions 34–94 (SCTPQQSDER…GLVNRILVCC (61 aa)) constitute a Clip domain. 6 disulfide bridges follow: Cys35–Cys93, Cys46–Cys77, Cys52–Cys94, Cys127–Cys269, Cys166–Cys182, and Cys211–Cys221. Residues 135 to 399 (IFGGTNTTLW…FIDWIKQKLE (265 aa)) enclose the Peptidase S1 domain. An N-linked (GlcNAc...) asparagine glycan is attached at Asn140. His181 acts as the Charge relay system in catalysis. Positions 202, 204, 207, and 210 each coordinate Ca(2+). The active-site Charge relay system is the Asp249. Residue Asn311 is glycosylated (N-linked (GlcNAc...) asparagine). Disulfide bonds link Cys315–Cys332 and Cys342–Cys375. The Charge relay system role is filled by Ser346.

The protein belongs to the peptidase S1 family. CLIP subfamily. As to quaternary structure, in the active form, heterodimer of a light chain and a heavy chain; disulfide-linked. Post-translationally, proteolytically cleaved in response to Gram-negative bacterial or fungal infection; processing is likely to result in its activation. Cleavage produces a light chain containing the CLIP domain and a catalytic heavy chain which remain covalently associated through an interchain disulfide bond.

It localises to the secreted. In terms of biological role, endopeptidase which plays a key role in innate immunity by cleaving Tl ligand spz and thereby activating the Toll pathway in response to fungal and Gram-positive bacterial infections. Acts downstream of pathogen recognition receptors PGRP-SA and GNBP1 and protease grass in response to Gram-positive bacterial infection. Acts downstream of protease psh in response to fungal infection. This Drosophila melanogaster (Fruit fly) protein is Spaetzle-processing enzyme.